Consider the following 301-residue polypeptide: Rhodopsin (301 aa).

Residues 1–18 (LHMIHLHWYQYPPMNPMM) lie on the Extracellular side of the membrane. A helical transmembrane segment spans residues 19–43 (YPLLLVFMLITGILCLAGNFVTIWV). At 44-55 (FMNTKSLRTPAN) the chain is on the cytoplasmic side. Residues 56–78 (LLVVNLAMSDFLMMFTMFPPMMI) traverse the membrane as a helical segment. The Extracellular segment spans residues 79–92 (TCYYHTWTLGATFC). Cys-92 and Cys-169 are joined by a disulfide. Residues 93-115 (EVYAFLGNLCGCASIWTMVFITF) form a helical membrane-spanning segment. Residues 116 to 118 (DRY) carry the 'Ionic lock' involved in activated form stabilization motif. Topologically, residues 116–134 (DRYNVIVKGVAGEPLSTKK) are cytoplasmic. The chain crosses the membrane as a helical span at residues 135 to 155 (ASLWILTVWVLSFTWCVAPFF). The Extracellular segment spans residues 156–182 (GWNRYVPEGNLTGCGTDYLSEDILSRS). An N-linked (GlcNAc...) asparagine glycan is attached at Asn-165. A helical membrane pass occupies residues 183–204 (YLYIYSTWVYFLPLAITIYCYV). Topologically, residues 205–245 (FIIKAVAAHEKGMRDQAKKMGIKSLRNEEAQKTSAECRLAK) are cytoplasmic. The helical transmembrane segment at 246–267 (IAMTTVALWFIAWTPYLLINWV) threads the bilayer. Topologically, residues 268 to 278 (GMFARSYLSPV) are extracellular. A helical membrane pass occupies residues 279–300 (YTIWGYVFAKANAVYNPIVYAI). The residue at position 288 (Lys-288) is an N6-(retinylidene)lysine.

The protein belongs to the G-protein coupled receptor 1 family. Opsin subfamily. As to quaternary structure, homodimer. Interacts with GNAQ. Contains one covalently linked retinal chromophore.

Its subcellular location is the cell projection. It localises to the rhabdomere membrane. Functionally, photoreceptor required for image-forming vision at low light intensity. Can use both retinal and 3-dehydroretinal as visual pigment. Light-induced isomerization of 11-cis to all-trans retinal triggers a conformational change that activates signaling via G-proteins. Signaling via GNAQ probably mediates the activation of phospholipase C. This is Rhodopsin (RHO) from Lacunicambarus ludovicianus (Painted devil crayfish).